Here is a 235-residue protein sequence, read N- to C-terminus: TVP38/TMEM64 family inner membrane protein YdjZ (235 aa).

Residues 1 to 13 (MMMMQSRKIWYYR) are Periplasmic-facing. A helical transmembrane segment spans residues 14-34 (ITLIILLFAMLLAWALLPGVH). Over 35 to 64 (EFINRSVAAFAAVDQQGIERFIQSYGALAA) the chain is Cytoplasmic. A helical membrane pass occupies residues 65 to 85 (VVSFLLMILQAIAAPLPAFLI). Residues 86-95 (TFANASLFGA) lie on the Periplasmic side of the membrane. Residues 90–199 (ASLFGAFWGG…IVYSWAGSML (110 aa)) are VTT domain. A helical membrane pass occupies residues 96–116 (FWGGLLSWTSSMAGAALCFFI). At 117 to 176 (ARVMGREVVEKLTGKTVLDSMDGFFTRYGKHTILVCRLLPFVPFDPISYAAGLTSIRFRS) the chain is on the cytoplasmic side. Residues 177-197 (FFIATGLGQLPATIVYSWAGS) traverse the membrane as a helical segment. The Periplasmic segment spans residues 198-202 (MLTGG). A helical membrane pass occupies residues 203 to 223 (TFWFVTGLFILFALTVVIFMA). At 224-235 (KKIWLERQKRNA) the chain is on the cytoplasmic side.

It belongs to the TVP38/TMEM64 family.

The protein localises to the cell inner membrane. This chain is TVP38/TMEM64 family inner membrane protein YdjZ (ydjZ), found in Escherichia coli (strain K12).